A 253-amino-acid chain; its full sequence is Testis-expressed protein 47 (253 aa).

In Mus musculus (Mouse), this protein is Testis-expressed protein 47 (Tex47).